A 144-amino-acid chain; its full sequence is Thyrostimulin alpha-2 subunit (144 aa).

The first 41 residues, 1 to 41 (MGRRDSGRAVAQRYRGVTRGVTVIACLMVVCACVGLCDATG), serve as a signal peptide directing secretion. Cystine bridges form between Cys52-Cys107, Cys66-Cys121, Cys76-Cys136, and Cys80-Cys138.

Belongs to the glycoprotein hormones subunit alpha family. As to quaternary structure, heterodimer with GPHB5; non-covalently-linked. In terms of tissue distribution, expressed by the venom duct.

The protein resides in the secreted. This is Thyrostimulin alpha-2 subunit from Conus victoriae (Queen Victoria cone).